The sequence spans 439 residues: Oxysterol-binding protein 6 (439 aa).

Disordered regions lie at residues M1–D40 and E409–N439. Polar residues-rich tracts occupy residues E409–D419 and P429–N439.

Belongs to the OSBP family.

The protein is Oxysterol-binding protein 6 (osbF) of Dictyostelium discoideum (Social amoeba).